The chain runs to 343 residues: Tetraacyldisaccharide 4'-kinase (343 aa).

Residue 53-60 (TCGGAGKT) participates in ATP binding.

This sequence belongs to the LpxK family.

The catalysed reaction is a lipid A disaccharide + ATP = a lipid IVA + ADP + H(+). It participates in glycolipid biosynthesis; lipid IV(A) biosynthesis; lipid IV(A) from (3R)-3-hydroxytetradecanoyl-[acyl-carrier-protein] and UDP-N-acetyl-alpha-D-glucosamine: step 6/6. In terms of biological role, transfers the gamma-phosphate of ATP to the 4'-position of a tetraacyldisaccharide 1-phosphate intermediate (termed DS-1-P) to form tetraacyldisaccharide 1,4'-bis-phosphate (lipid IVA). This Bartonella quintana (strain Toulouse) (Rochalimaea quintana) protein is Tetraacyldisaccharide 4'-kinase.